A 210-amino-acid chain; its full sequence is Transposable element activator uncharacterized 23 kDa protein (210 aa).

Basic and acidic residues predominate over residues 67-78; it reads SGRMGGPRRDGR. The segment at 67-87 is disordered; sequence SGRMGGPRRDGRVASSGVEGG.

The polypeptide is Transposable element activator uncharacterized 23 kDa protein (Zea mays (Maize)).